A 385-amino-acid chain; its full sequence is Polyketide synthase 3 (385 aa).

Residue C157 is part of the active site.

It belongs to the thiolase-like superfamily. Chalcone/stilbene synthases family. As to expression, expressed in male and female flowers, and seedlings.

It localises to the cytoplasm. Its function is as follows. Polyketide synthase responsible for the biosynthesis of secondary metabolites. The chain is Polyketide synthase 3 (PKSF3) from Cannabis sativa (Hemp).